Here is a 705-residue protein sequence, read N- to C-terminus: Catalase C (705 aa).

The tract at residues 1–31 (MAKKPSAPNNTKPATIHDQKATRGNGGELHQ) is disordered. Active-site residues include histidine 88 and asparagine 161. Residue tyrosine 375 participates in heme binding.

It belongs to the catalase family. HPII subfamily. Heme serves as cofactor.

It catalyses the reaction 2 H2O2 = O2 + 2 H2O. Decomposes hydrogen peroxide into water and oxygen; serves to protect cells from the toxic effects of hydrogen peroxide. Could protect cells in nodules which have a high potential to produce hydrogen peroxide because of the strong reducing conditions required for nitrogen fixation and the action of several proteins. This Rhizobium meliloti (strain 1021) (Ensifer meliloti) protein is Catalase C (katE).